The sequence spans 434 residues: MQATVETISNLERRMTVSVPVQPLESEVNERINRLARTVKMPGFRPGKVPLNIVRQQYGAQVRNEVLSNAVERSFSDAVEQNKLRVAGYPHIEHKPYAENDPQIEYVATFEVFPEVNIGDLSKAKIERPVLEVGEAEVKKTIDVLLRQRATFEPVKRASKKGDKINISLIAYIDDQEVERTDENGLDLIIGEGGRFPAFESELSGNKAGSNKVFEIAYPEDHKPEQLAGKTVRYDVTFNTVEQAKLPEFDADFARSLGVEDGDVEKMREEITASLKQEVEKRIRVKLKEQAFQALLDNTALEVPKAFINAEVGRLIQSTQDNLKQRGVDLANVNLEPALFEEQATRNASLRLILSELVNRENLQANAEQVRNMVNVFAQSFERPDDVVTWYYADTKRLDEPAALATEDNVVEWVLKSANVVDKKVKFDDLMGNS.

A PPIase FKBP-type domain is found at 162-247 (GDKINISLIA…FNTVEQAKLP (86 aa)).

Belongs to the FKBP-type PPIase family. Tig subfamily.

The protein resides in the cytoplasm. The enzyme catalyses [protein]-peptidylproline (omega=180) = [protein]-peptidylproline (omega=0). Functionally, involved in protein export. Acts as a chaperone by maintaining the newly synthesized protein in an open conformation. Functions as a peptidyl-prolyl cis-trans isomerase. The sequence is that of Trigger factor from Methylobacillus flagellatus (strain ATCC 51484 / DSM 6875 / VKM B-1610 / KT).